The sequence spans 296 residues: Ribonuclease HIII (296 aa).

The region spanning 80–296 (LALIGSDEVG…NTKKAYQRLK (217 aa)) is the RNase H type-2 domain. A divalent metal cation-binding residues include aspartate 86, glutamate 87, and aspartate 191.

The protein belongs to the RNase HII family. RnhC subfamily. The cofactor is Mn(2+). Mg(2+) is required as a cofactor.

The protein resides in the cytoplasm. It carries out the reaction Endonucleolytic cleavage to 5'-phosphomonoester.. Its function is as follows. Endonuclease that specifically degrades the RNA of RNA-DNA hybrids. This Streptococcus thermophilus (strain CNRZ 1066) protein is Ribonuclease HIII.